A 1086-amino-acid chain; its full sequence is MGNAGSMDSQQTDFRAHNVPLKLPMPEPGELEERFAIVLNAMNLPPDKARLLRQYDNEKKWELICDQERFQVKNPPHTYIQKLKGYLDPAVTRKKFRRRVQESTQVLRELEISLRTNHIGWVREFLNEENKGLDVLVEYLSFAQYAVTFDFESVESTVESSVDKSKPWSRSIEDLHRGSNLPSPVGNSVSRSGRHSALRYNTLPSRRTLKNSRLVSKKDDVHVCIMCLRAIMNYQYGFNMVMSHPHAVNEIALSLNNKNPRTKALVLELLAAVCLVRGGHEIILSAFDNFKEVCGEKQRFEKLMEHFRNEDNNIDFMVASMQFINIVVHSVEDMNFRVHLQYEFTKLGLDEYLDKLKHTESDKLQVQIQAYLDNVFDVGALLEDAETKNAALERVEELEENISHLSEKLQDTENEAMSKIVELEKQLMQRNKELDVVREIYKDANTQVHTLRKMVKEKEEAIQRQSTLEKKIHELEKQGTIKIQKKGDGDIAILPVVASGTLSMGSEVVAGNSVGPTMGAASSGPLPPPPPPLPPSSDTPETVQNGPVTPPMPPPPPPPPPPPPPPPPPPPPPLPGPAAETVPAPPLAPPLPSAPPLPGTSSPTVVFNSGLAAVKIKKPIKTKFRMPVFNWVALKPNQINGTVFNEIDDERILEDLNVDEFEEIFKTKAQGPAIDLSSSKQKIPQKGSNKVTLLEANRAKNLAITLRKAGKTADEICKAIHVFDLKTLPVDFVECLMRFLPTENEVKVLRLYERERKPLENLSDEDRFMMQFSKIERLMQKMTIMAFIGNFAESIQMLTPQLHAIIAASVSIKSSQKLKKILEIILALGNYMNSSKRGAVYGFKLQSLDLLLDTKSTDRKQTLLHYISNVVKEKYHQVSLFYNELHYVEKAAAVSLENVLLDVKELQRGMDLTKREYTMHDHNTLLKEFILNNEGKLKKLQDDAKIAQDAFDDVVKYFGENPKTTPPSVFFPVFVRFVKAYKQAEEENELRKKQEQALMEKLLEQEALMEQQDPKSPSHKSKRQQQELIAELRRRQVKDNRHVYEGKDGAIEDIITVLKTVPFTARTAKRGSRFFCEPVLTEEYHY.

Gly-2 is lipidated: N-myristoyl glycine. The GBD/FH3 domain occupies 23-469; that stretch reads LPMPEPGELE…EAIQRQSTLE (447 aa). At Ser-188 the chain carries Phosphoserine. Residues 513–597 form a disordered region; the sequence is SVGPTMGAAS…APPLPSAPPL (85 aa). A compositionally biased stretch (pro residues) spans 525-537; that stretch reads PLPPPPPPLPPSS. Positions 538 to 547 are enriched in polar residues; that stretch reads DTPETVQNGP. 2 stretches are compositionally biased toward pro residues: residues 548–576 and 583–597; these read VTPPMPPPPPPPPPPPPPPPPPPPPPLPG and PAPPLAPPLPSAPPL. The FH2 domain maps to 616-1007; the sequence is IKKPIKTKFR…LMEKLLEQEA (392 aa). Residues 1040–1079 form the DAD domain; the sequence is NRHVYEGKDGAIEDIITVLKTVPFTARTAKRGSRFFCEPV.

Belongs to the formin homology family.

It localises to the cytoplasm. In terms of biological role, plays a role in the regulation of cell morphology and cytoskeletal organization. Required in the cortical actin filament dynamics. This chain is Formin-like protein 2, found in Homo sapiens (Human).